Consider the following 216-residue polypeptide: Large ribosomal subunit protein uL3 (216 aa).

The residue at position 153 (glutamine 153) is an N5-methylglutamine.

The protein belongs to the universal ribosomal protein uL3 family. As to quaternary structure, part of the 50S ribosomal subunit. Forms a cluster with proteins L14 and L19. Methylated by PrmB.

Its function is as follows. One of the primary rRNA binding proteins, it binds directly near the 3'-end of the 23S rRNA, where it nucleates assembly of the 50S subunit. This is Large ribosomal subunit protein uL3 from Burkholderia multivorans (strain ATCC 17616 / 249).